The primary structure comprises 451 residues: uncharacterized protein (451 aa).

Positions 2–60 (NLKVKQKIPLKIKRMGINGEGIGFYQKTLVFVPGALKGEDIYCQITSIRRNFVEAKLLK) constitute a TRAM domain. The [4Fe-4S] cluster site is built by cysteine 73, cysteine 79, cysteine 82, and cysteine 162. The S-adenosyl-L-methionine site is built by glutamine 283, tyrosine 312, aspartate 333, and aspartate 381. Cysteine 408 acts as the Nucleophile in catalysis.

Belongs to the class I-like SAM-binding methyltransferase superfamily. RNA M5U methyltransferase family.

This is an uncharacterized protein from Streptococcus pneumoniae serotype 4 (strain ATCC BAA-334 / TIGR4).